A 111-amino-acid polypeptide reads, in one-letter code: Probable U2 small nuclear ribonucleoprotein B'' (111 aa).

The region spanning 4–83 (NTLYVNNLND…KEMKIQYAHS (80 aa)) is the RRM domain.

As to quaternary structure, belongs to the 40S cdc5-associated complex (or cwf complex), a spliceosome sub-complex reminiscent of a late-stage spliceosome composed of the U2, U5 and U6 snRNAs and at least brr2, cdc5, cwf2/prp3, cwf3/syf1, cwf4/syf3, cwf5/ecm2, spp42/cwf6, cwf7/spf27, cwf8, cwf9, cwf10, cwf11, cwf12, prp45/cwf13, cwf14, cwf15, cwf16, cwf17, cwf18, cwf19, cwf20, cwf21, cwf22, cwf23, cwf24, cwf25, cwf26, cyp7/cwf27, cwf28, cwf29/ist3, lea1, msl1, prp5/cwf1, prp10, prp12/sap130, prp17, prp22, sap61, sap62, sap114, sap145, slu7, smb1, smd1, smd3, smf1, smg1 and syf2.

It is found in the nucleus. Its function is as follows. Involved in pre-mRNA splicing. This protein is associated with snRNP U2. It binds stem loop IV of U2 snRNA. The sequence is that of Probable U2 small nuclear ribonucleoprotein B'' (msl1) from Schizosaccharomyces pombe (strain 972 / ATCC 24843) (Fission yeast).